The sequence spans 175 residues: Ribosome maturation factor RimM (175 aa).

The region spanning 103-175 (EGEYYWSDLI…LLTVDWDPDF (73 aa)) is the PRC barrel domain.

It belongs to the RimM family. As to quaternary structure, binds ribosomal protein uS19.

Its subcellular location is the cytoplasm. Functionally, an accessory protein needed during the final step in the assembly of 30S ribosomal subunit, possibly for assembly of the head region. Essential for efficient processing of 16S rRNA. May be needed both before and after RbfA during the maturation of 16S rRNA. It has affinity for free ribosomal 30S subunits but not for 70S ribosomes. The polypeptide is Ribosome maturation factor RimM (Nitrosococcus oceani (strain ATCC 19707 / BCRC 17464 / JCM 30415 / NCIMB 11848 / C-107)).